The chain runs to 206 residues: Regulatory protein CysR (206 aa).

Positions 120–196 (RRAEAKLASL…DRALIVRYPE (77 aa)) constitute an HTH crp-type domain. A DNA-binding region (H-T-H motif) is located at residues 156-175 (HQVIAELSGSTRVTTTRLLG).

The protein localises to the cytoplasm. Its function is as follows. Probably regulates the expression of genes from the sulfate permease complex. This chain is Regulatory protein CysR (cysR), found in Synechococcus elongatus (strain ATCC 33912 / PCC 7942 / FACHB-805) (Anacystis nidulans R2).